A 426-amino-acid polypeptide reads, in one-letter code: 4-hydroxy-3-methylbut-2-en-1-yl diphosphate synthase (flavodoxin) (426 aa).

Cys310, Cys313, Cys356, and Glu363 together coordinate [4Fe-4S] cluster.

The protein belongs to the IspG family. It depends on [4Fe-4S] cluster as a cofactor.

It catalyses the reaction (2E)-4-hydroxy-3-methylbut-2-enyl diphosphate + oxidized [flavodoxin] + H2O + 2 H(+) = 2-C-methyl-D-erythritol 2,4-cyclic diphosphate + reduced [flavodoxin]. Its pathway is isoprenoid biosynthesis; isopentenyl diphosphate biosynthesis via DXP pathway; isopentenyl diphosphate from 1-deoxy-D-xylulose 5-phosphate: step 5/6. Converts 2C-methyl-D-erythritol 2,4-cyclodiphosphate (ME-2,4cPP) into 1-hydroxy-2-methyl-2-(E)-butenyl 4-diphosphate. The protein is 4-hydroxy-3-methylbut-2-en-1-yl diphosphate synthase (flavodoxin) of Rhodopseudomonas palustris (strain BisA53).